The primary structure comprises 339 residues: Small ribosomal subunit biogenesis GTPase RsgA (339 aa).

The CP-type G domain occupies 111-271 (MRGLLKPVAA…LIDSPGIREF (161 aa)). GTP-binding positions include 159–162 (NKAD) and 213–221 (GQSGVGKSS). Residues Cys-295, Cys-300, His-302, and Cys-308 each contribute to the Zn(2+) site.

This sequence belongs to the TRAFAC class YlqF/YawG GTPase family. RsgA subfamily. Monomer. Associates with 30S ribosomal subunit, binds 16S rRNA. It depends on Zn(2+) as a cofactor.

It is found in the cytoplasm. Its function is as follows. One of several proteins that assist in the late maturation steps of the functional core of the 30S ribosomal subunit. Helps release RbfA from mature subunits. May play a role in the assembly of ribosomal proteins into the subunit. Circularly permuted GTPase that catalyzes slow GTP hydrolysis, GTPase activity is stimulated by the 30S ribosomal subunit. In Pseudomonas aeruginosa (strain ATCC 15692 / DSM 22644 / CIP 104116 / JCM 14847 / LMG 12228 / 1C / PRS 101 / PAO1), this protein is Small ribosomal subunit biogenesis GTPase RsgA.